An 884-amino-acid polypeptide reads, in one-letter code: Probable disease resistance protein At1g12290 (884 aa).

Positions 26–66 form a coiled coil; it reads LYYIQNIKENLTSLEEAMEDLKALRDDLLRKVQTAEEGGLQ. In terms of domain architecture, NB-ARC spans 139-443; the sequence is AHPATRAVGE…CEGFIDGDEN (305 aa). 182-189 serves as a coordination point for ATP; that stretch reads GMGGVGKT. LRR repeat units lie at residues 519-540, 541-563, 566-588, 590-612, 613-635, and 644-664; these read VVSR…PECP, KLTT…FFRS, RLVV…ISEL, SLRY…LKLK, KLMH…DHLS, and NLRM…ENLE.

It belongs to the disease resistance NB-LRR family.

Functionally, probable disease resistance protein. The chain is Probable disease resistance protein At1g12290 from Arabidopsis thaliana (Mouse-ear cress).